The primary structure comprises 394 residues: Ribulose bisphosphate carboxylase large chain (394 aa).

Position 5 is an N6,N6,N6-trimethyllysine (lysine 5). Substrate-binding residues include asparagine 114 and threonine 164. Lysine 166 acts as the Proton acceptor in catalysis. Lysine 168 is a substrate binding site. 3 residues coordinate Mg(2+): lysine 192, aspartate 194, and glutamate 195. N6-carboxylysine is present on lysine 192. The Proton acceptor role is filled by histidine 285. Substrate contacts are provided by arginine 286, histidine 318, and serine 370.

This sequence belongs to the RuBisCO large chain family. Type I subfamily. Heterohexadecamer of 8 large chains and 8 small chains. It depends on Mg(2+) as a cofactor.

The protein localises to the plastid. Its subcellular location is the chloroplast. It carries out the reaction 2 (2R)-3-phosphoglycerate + 2 H(+) = D-ribulose 1,5-bisphosphate + CO2 + H2O. The catalysed reaction is D-ribulose 1,5-bisphosphate + O2 = 2-phosphoglycolate + (2R)-3-phosphoglycerate + 2 H(+). In terms of biological role, ruBisCO catalyzes two reactions: the carboxylation of D-ribulose 1,5-bisphosphate, the primary event in carbon dioxide fixation, as well as the oxidative fragmentation of the pentose substrate in the photorespiration process. Both reactions occur simultaneously and in competition at the same active site. In Victoria cruziana (Santa Cruz water lily), this protein is Ribulose bisphosphate carboxylase large chain (rbcL).